The primary structure comprises 230 residues: Octanoyltransferase (230 aa).

In terms of domain architecture, BPL/LPL catalytic spans 40–218 (PSLDDVLILL…CFAEVFGVEL (179 aa)). Residues 82-89 (RGGEVTYH), 149-151 (AIG), and 162-164 (GFA) contribute to the substrate site. The active-site Acyl-thioester intermediate is the Cys-180.

Belongs to the LipB family.

It localises to the cytoplasm. The enzyme catalyses octanoyl-[ACP] + L-lysyl-[protein] = N(6)-octanoyl-L-lysyl-[protein] + holo-[ACP] + H(+). Its pathway is protein modification; protein lipoylation via endogenous pathway; protein N(6)-(lipoyl)lysine from octanoyl-[acyl-carrier-protein]: step 1/2. In terms of biological role, catalyzes the transfer of endogenously produced octanoic acid from octanoyl-acyl-carrier-protein onto the lipoyl domains of lipoate-dependent enzymes. Lipoyl-ACP can also act as a substrate although octanoyl-ACP is likely to be the physiological substrate. The polypeptide is Octanoyltransferase (Nostoc punctiforme (strain ATCC 29133 / PCC 73102)).